The primary structure comprises 305 residues: D-alanine--D-alanine ligase (305 aa).

The region spanning 104 to 300 is the ATP-grasp domain; it reads RALFASAGIP…FPELVRWMVE (197 aa). 131–181 contributes to the ATP binding site; sequence LPRPFVVKPLNEGSSVGVFIVRDNQPSPLPDWPFDADEVLVESFIPGRELT. Mg(2+) contacts are provided by Asp-249, Glu-267, and Asn-269.

Belongs to the D-alanine--D-alanine ligase family. It depends on Mg(2+) as a cofactor. Requires Mn(2+) as cofactor.

The protein resides in the cytoplasm. The enzyme catalyses 2 D-alanine + ATP = D-alanyl-D-alanine + ADP + phosphate + H(+). Its pathway is cell wall biogenesis; peptidoglycan biosynthesis. Cell wall formation. This chain is D-alanine--D-alanine ligase, found in Paramagnetospirillum magneticum (strain ATCC 700264 / AMB-1) (Magnetospirillum magneticum).